A 144-amino-acid chain; its full sequence is Bacilliredoxin BH1716 (144 aa).

Belongs to the bacilliredoxin family.

This is Bacilliredoxin BH1716 from Halalkalibacterium halodurans (strain ATCC BAA-125 / DSM 18197 / FERM 7344 / JCM 9153 / C-125) (Bacillus halodurans).